The following is a 202-amino-acid chain: Dephospho-CoA kinase (202 aa).

The region spanning 6–202 (KVSITGDLSS…EYFYALKGAL (197 aa)) is the DPCK domain. ATP is bound at residue 14-19 (SSGKTE).

Belongs to the CoaE family.

Its subcellular location is the cytoplasm. It carries out the reaction 3'-dephospho-CoA + ATP = ADP + CoA + H(+). The protein operates within cofactor biosynthesis; coenzyme A biosynthesis; CoA from (R)-pantothenate: step 5/5. Its function is as follows. Catalyzes the phosphorylation of the 3'-hydroxyl group of dephosphocoenzyme A to form coenzyme A. This Chlamydia abortus (strain DSM 27085 / S26/3) (Chlamydophila abortus) protein is Dephospho-CoA kinase.